A 265-amino-acid chain; its full sequence is Pre-protein VI (265 aa).

The propeptide occupies 1–33 (MEDINFSSLAPRHGTRPYMGTWNEIGTSQLNGG). Residues 34-54 (AFNWNSIWSGLKNFGSTIKTY) form an amphipathic alpha-helix essential for membrane lytic activity region. The segment at 36–53 (NWNSIWSGLKNFGSTIKT) is involved in endosomal membrane lysis. The segment at 48–74 (GSTIKTYGTKAWNSQTGQMLRDKLKDQ) is interaction with hexon protein. The Nuclear export signal signature appears at 67 to 76 (LRDKLKDQNF). The tract at residues 123–155 (LETVPGSVPTKGEKRPRPDAEETLVTHTTEPPS) is disordered. Basic and acidic residues predominate over residues 133–142 (KGEKRPRPDA). The short motif at 136 to 140 (KRPRP) is the Nuclear localization signal element. At threonine 148 the chain carries Phosphothreonine; by host. Residues 153 to 156 (PPSY) carry the PPXY motif motif. Positions 246 to 257 (STLNSIVGLGVK) match the Nuclear export signal motif. The interaction with hexon protein stretch occupies residues 248–254 (LNSIVGL). Positions 255 to 265 (GVKSLKRRRCY) are binds to importin alpha/beta, involved in hexon nuclear import. A Nuclear localization signal motif is present at residues 260–263 (KRRR).

It belongs to the adenoviridae protein VI family. In terms of assembly, interacts with hexon protein; this interaction allows nuclear import of hexon trimers and possibly pre-capsid assembly. Interacts (via C-terminal NLS) with importin alpha/beta. As to quaternary structure, interacts (via PPxY motif) with host NEDD4 ubiquitine ligase; this interaction might play a role in virus intracellular transport during entry. Part of a complex composed of the core-capsid bridging protein, the endosome lysis protein VI and the hexon-linking protein VIII; these interactions bridge the virus core to the capsid. Interacts with peripentonal hexons; this interaction stabilizes the capsid by gluing two peripentonal hexons together and joining them with an adjacent group-of-nine hexon. Heterodimer with the viral protease; disulfide-linked. Interacts with the viral protease. Post-translationally, ubiquitinated by Nedd4 following partial capsid disassembly; which might play a role in intracellular virus movement during entry. In terms of processing, contains the major nuclear import and export signals. Proteolytically removed during virion maturation. The processing of the C-terminus turns the precursor into a mature viral structural protein and abrogates its ability to promote hexon import and act as a potential chaperone protein.

It is found in the host nucleus. The protein resides in the host cytoplasm. The protein localises to the virion. During virus assembly, promotes hexon trimers nuclear import through nuclear pore complexes via an importin alpha/beta-dependent mechanism. By analogy to herpesviruses capsid assembly, might act as a chaperone to promote the formation of the icosahedral capsid. Its function is as follows. Structural component of the virion that provides increased stability to the particle shell through its interaction with the core-capsid bridging protein and the hexon-linking protein VIII. Fibers shedding during virus entry into host cell allows the endosome lysis protein to be exposed as a membrane-lytic peptide. Exhibits pH-independent membrane fragmentation activity and probably mediates viral rapid escape from host endosome via organellar membrane lysis. It is not clear if it then remains partially associated with the capsid and involved in the intracellular microtubule-dependent transport of capsid to the nucleus, or if it is lost during endosomal penetration. Functionally, cofactor that activates the viral protease. Binds to viral protease in a 1:1 ratio. The chain is Pre-protein VI from Human adenovirus A serotype 12 (HAdV-12).